A 153-amino-acid polypeptide reads, in one-letter code: UPF0266 membrane protein SG1324 (153 aa).

Transmembrane regions (helical) follow at residues 6–26 (IGLV…EFIV), 46–66 (LDGL…ITTD), and 68–88 (KVMT…LAYI).

Belongs to the UPF0266 family.

It is found in the cell inner membrane. This Sodalis glossinidius (strain morsitans) protein is UPF0266 membrane protein SG1324.